The following is a 435-amino-acid chain: Adenylosuccinate synthetase (435 aa).

Residues 17 to 23 (GDEGKGK) and 45 to 47 (GHT) each bind GTP. Catalysis depends on Asp-18, which acts as the Proton acceptor. Positions 18 and 45 each coordinate Mg(2+). IMP contacts are provided by residues 18–21 (DEGK), 43–46 (NAGH), Thr-134, Arg-148, Gln-229, Thr-244, and Arg-308. His-46 serves as the catalytic Proton donor. A substrate-binding site is contributed by 304 to 310 (SVTGRPR). GTP is bound by residues Arg-310, 336-338 (KLD), and 418-420 (STG).

This sequence belongs to the adenylosuccinate synthetase family. Homodimer. It depends on Mg(2+) as a cofactor.

The protein localises to the cytoplasm. It carries out the reaction IMP + L-aspartate + GTP = N(6)-(1,2-dicarboxyethyl)-AMP + GDP + phosphate + 2 H(+). It functions in the pathway purine metabolism; AMP biosynthesis via de novo pathway; AMP from IMP: step 1/2. In terms of biological role, plays an important role in the de novo pathway of purine nucleotide biosynthesis. Catalyzes the first committed step in the biosynthesis of AMP from IMP. The chain is Adenylosuccinate synthetase from Bordetella pertussis (strain Tohama I / ATCC BAA-589 / NCTC 13251).